The following is a 532-amino-acid chain: Collagen alpha-1(XXIII) chain (532 aa).

At 1–23 the chain is on the cytoplasmic side; it reads MGAGERAAGGGGAQDPGAGCGSR. Residues 24 to 45 form a helical; Signal-anchor for type II membrane protein membrane-spanning segment; the sequence is ALSALCLLLSVGSAAACLLLGA. Over 46–532 the chain is Extracellular; it reads QAAALHGRVA…GLPVPGCWHK (487 aa). Disordered regions lie at residues 102-296 and 308-532; these read PSEC…GEQG and LDAL…CWHK. Collagen-like domains are found at residues 108–166, 173–232, 240–298, and 313–372; these read PPGP…RGAQ, GPPG…PGKK, QPGL…QGDT, and GPPG…MGLS. The segment covering 129–145 has biased composition (low complexity); that stretch reads QSGRDGYPGPLGLDGKP. Pro residues predominate over residues 174 to 184; the sequence is PPGPPGPPGAR. The span at 196 to 207 shows a compositional bias: low complexity; it reads RGAQGPAGPRGE. Over residues 314–326 the composition is skewed to pro residues; sequence PPGPQGAPGPPGI. Composition is skewed to basic and acidic residues over residues 342 to 354 and 380 to 393; these read DGEK…KGDP and PKGE…DHLQ. A compositionally biased stretch (pro residues) spans 403 to 414; the sequence is PGPPGPPGPPGP. Collagen-like domains lie at 404 to 452 and 455 to 514; these read GPPG…GPPG and GLPG…PGLD. Composition is skewed to basic and acidic residues over residues 427–441 and 478–495; these read DGAK…ERGP and RGEK…ERGV.

Homotrimer. In terms of processing, undergoes proteolytic cleavage by furin protease to yield a 60 kDa soluble form that forms a homotrimer and exhibits a low affinity interaction with heparin.

It localises to the cell membrane. This chain is Collagen alpha-1(XXIII) chain (Col23a1), found in Mus musculus (Mouse).